The following is a 309-amino-acid chain: tRNA pseudouridine synthase B (309 aa).

The Nucleophile role is filled by Asp-39.

Belongs to the pseudouridine synthase TruB family. Type 1 subfamily.

It carries out the reaction uridine(55) in tRNA = pseudouridine(55) in tRNA. Its function is as follows. Responsible for synthesis of pseudouridine from uracil-55 in the psi GC loop of transfer RNAs. This is tRNA pseudouridine synthase B from Bacillus subtilis (strain 168).